A 671-amino-acid chain; its full sequence is UvrABC system protein B (671 aa).

Positions 25-412 constitute a Helicase ATP-binding domain; the sequence is EGIEAGLAHQ…AGRVVEQVVR (388 aa). An ATP-binding site is contributed by 38–45; the sequence is GVTGSGKT. The Beta-hairpin motif lies at 91–114; the sequence is YYDYYQPEAYVPSSDTFIEKDASI. The 154-residue stretch at 429-582 folds into the Helicase C-terminal domain; it reads QVDDLLSEIT…QIAFNLANGI (154 aa). The interval 601–623 is disordered; sequence PGSRSKKRKGMAKAAEENARYEN. The span at 614–623 shows a compositional bias: basic and acidic residues; it reads AAEENARYEN. Positions 632-667 constitute a UVR domain; sequence TKRIRQLEEKMYQLARDLEFEAAAQMRDEITKLRER.

The protein belongs to the UvrB family. Forms a heterotetramer with UvrA during the search for lesions. Interacts with UvrC in an incision complex.

The protein localises to the cytoplasm. The UvrABC repair system catalyzes the recognition and processing of DNA lesions. A damage recognition complex composed of 2 UvrA and 2 UvrB subunits scans DNA for abnormalities. Upon binding of the UvrA(2)B(2) complex to a putative damaged site, the DNA wraps around one UvrB monomer. DNA wrap is dependent on ATP binding by UvrB and probably causes local melting of the DNA helix, facilitating insertion of UvrB beta-hairpin between the DNA strands. Then UvrB probes one DNA strand for the presence of a lesion. If a lesion is found the UvrA subunits dissociate and the UvrB-DNA preincision complex is formed. This complex is subsequently bound by UvrC and the second UvrB is released. If no lesion is found, the DNA wraps around the other UvrB subunit that will check the other stand for damage. The sequence is that of UvrABC system protein B from Pseudomonas fluorescens (strain ATCC BAA-477 / NRRL B-23932 / Pf-5).